Reading from the N-terminus, the 548-residue chain is Probable malate:quinone oxidoreductase (548 aa).

Positions 522–548 (KPQAADSTPKPQLKPKPVQKEVADIAL) are disordered. A compositionally biased stretch (basic and acidic residues) spans 539-548 (VQKEVADIAL).

It belongs to the MQO family. The cofactor is FAD.

It carries out the reaction (S)-malate + a quinone = a quinol + oxaloacetate. Its pathway is carbohydrate metabolism; tricarboxylic acid cycle; oxaloacetate from (S)-malate (quinone route): step 1/1. The chain is Probable malate:quinone oxidoreductase from Escherichia coli O9:H4 (strain HS).